The primary structure comprises 361 residues: Phospho-N-acetylmuramoyl-pentapeptide-transferase (361 aa).

A run of 11 helical transmembrane segments spans residues 10-30, 40-60, 84-104, 107-127, 147-167, 175-195, 206-226, 232-252, 260-280, 288-308, and 341-361; these read PGTG…ACLI, LSLP…IGVP, GTPT…GSLV, GDPR…IGGI, LLLQ…HGAI, WGWL…VFLA, LDGL…LQLM, GDPA…GFLL, VFMG…IALL, LLMG…VWVF, and VVVS…VLVP.

It belongs to the glycosyltransferase 4 family. MraY subfamily. The cofactor is Mg(2+).

It localises to the cell inner membrane. It carries out the reaction UDP-N-acetyl-alpha-D-muramoyl-L-alanyl-gamma-D-glutamyl-meso-2,6-diaminopimeloyl-D-alanyl-D-alanine + di-trans,octa-cis-undecaprenyl phosphate = di-trans,octa-cis-undecaprenyl diphospho-N-acetyl-alpha-D-muramoyl-L-alanyl-D-glutamyl-meso-2,6-diaminopimeloyl-D-alanyl-D-alanine + UMP. It participates in cell wall biogenesis; peptidoglycan biosynthesis. Its function is as follows. Catalyzes the initial step of the lipid cycle reactions in the biosynthesis of the cell wall peptidoglycan: transfers peptidoglycan precursor phospho-MurNAc-pentapeptide from UDP-MurNAc-pentapeptide onto the lipid carrier undecaprenyl phosphate, yielding undecaprenyl-pyrophosphoryl-MurNAc-pentapeptide, known as lipid I. This Synechococcus sp. (strain RCC307) protein is Phospho-N-acetylmuramoyl-pentapeptide-transferase.